The primary structure comprises 117 residues: Immunoglobulin heavy variable 1-69-2 (117 aa).

Positions 1–19 (MDCTWRILLLVAAATGTHA) are cleaved as a signal peptide. The segment at 20–44 (EVQLVQSGAEVKKPGATVKISCKVS) is framework-1. Residues 20 to 117 (EVQLVQSGAE…EDTAVYYCAT (98 aa)) enclose the Ig-like domain. Cys41 and Cys115 are oxidised to a cystine. The tract at residues 45–52 (GYTFTDYY) is complementarity-determining-1. Positions 53 to 69 (MHWVQQAPGKGLEWMGL) are framework-2. Residues 70–77 (VDPEDGET) are complementarity-determining-2. A framework-3 region spans residues 78–115 (IYAEKFQGRVTITADTSTDTAYMELSSLRSEDTAVYYC). Residues 116-117 (AT) are complementarity-determining-3.

As to quaternary structure, immunoglobulins are composed of two identical heavy chains and two identical light chains; disulfide-linked.

The protein resides in the secreted. It localises to the cell membrane. Its function is as follows. V region of the variable domain of immunoglobulin heavy chains that participates in the antigen recognition. Immunoglobulins, also known as antibodies, are membrane-bound or secreted glycoproteins produced by B lymphocytes. In the recognition phase of humoral immunity, the membrane-bound immunoglobulins serve as receptors which, upon binding of a specific antigen, trigger the clonal expansion and differentiation of B lymphocytes into immunoglobulins-secreting plasma cells. Secreted immunoglobulins mediate the effector phase of humoral immunity, which results in the elimination of bound antigens. The antigen binding site is formed by the variable domain of one heavy chain, together with that of its associated light chain. Thus, each immunoglobulin has two antigen binding sites with remarkable affinity for a particular antigen. The variable domains are assembled by a process called V-(D)-J rearrangement and can then be subjected to somatic hypermutations which, after exposure to antigen and selection, allow affinity maturation for a particular antigen. The sequence is that of Immunoglobulin heavy variable 1-69-2 from Homo sapiens (Human).